We begin with the raw amino-acid sequence, 603 residues long: Protein SHORT-ROOT 2 (603 aa).

Disordered regions lie at residues 11–58 (HHHH…HSHS) and 106–140 (DFSS…SSAG). Low complexity predominate over residues 31–44 (SYPSSRGSTSSPSS). A compositionally biased stretch (basic residues) spans 45-58 (HHTHNHTYYHHSHS). Low complexity predominate over residues 108–125 (SSSSSSRQFHSGTGAPSS). The GRAS domain occupies 179–602 (AAPSSSGRWA…QPVVWASAWK (424 aa)). A leucine repeat I (LRI) region spans residues 186–249 (RWAAQLLMEC…LTTSGPRTLR (64 aa)). A VHIID region spans residues 268-354 (ALKFQELSPW…DTPHLSITTV (87 aa)). The short motif at 318 to 322 (LHILD) is the VHIID element. Positions 370-406 (EIGQRLEKFARLMGVPFSFRAVHHAGDLADLDLAALD) are leucine repeat II (LRII). The PFYRE stretch occupies residues 416–514 (LAVNCVNALR…ERAVGRAIVD (99 aa)). The SAW stretch occupies residues 517–602 (SCPASQSAER…QPVVWASAWK (86 aa)).

This sequence belongs to the GRAS family. Does not interact with SCR1.

Its subcellular location is the nucleus. In terms of biological role, putative transcription factor involved in asymmetric cell division. This chain is Protein SHORT-ROOT 2 (SHR2), found in Oryza sativa subsp. indica (Rice).